The chain runs to 463 residues: Asparagine--tRNA ligase (463 aa).

Belongs to the class-II aminoacyl-tRNA synthetase family. Homodimer.

It is found in the cytoplasm. It carries out the reaction tRNA(Asn) + L-asparagine + ATP = L-asparaginyl-tRNA(Asn) + AMP + diphosphate + H(+). The chain is Asparagine--tRNA ligase from Desulfitobacterium hafniense (strain Y51).